Consider the following 440-residue polypeptide: IAA-amino acid hydrolase ILR1-like 4 (440 aa).

The N-terminal stretch at 1 to 23 (MSFFKWVSFVLILHLLNPTLISC) is a signal peptide. Mn(2+) contacts are provided by C134, H136, E170, H194, and H397. Residues 437-440 (KDEL) carry the Prevents secretion from ER motif.

This sequence belongs to the peptidase M20 family. It depends on Mn(2+) as a cofactor. In terms of tissue distribution, expressed in leaves, stems, roots, siliques and flowers. Detected in the vascular tissue of cotyledons and roots, in adult leaves, stems, siliques, petals, hydathodes and in silique abscission zones and funicles.

Its subcellular location is the endoplasmic reticulum lumen. It carries out the reaction a jasmonyl-L-amino acid + H2O = a jasmonate + an L-alpha-amino acid. Functionally, hydrolyzes certain amino acid conjugates of the plant growth regulator indole-3-acetic acid (IAA), including IAA-Ala, IAA-Asn, IAA-Cys, IAA-Glu, IAA-Met, IAA-Ser and IAA-Gly. Has a lower efficiency with IAA-Phe, IAA-Leu and IAA-Val and no activity with IAA-Ile. Important for IAA-Leu hydrolysis in roots. Also hydrolyzes amino acid conjugates of jasmonic acid and 12-hydroxy jasmonic acid. The protein is IAA-amino acid hydrolase ILR1-like 4 of Arabidopsis thaliana (Mouse-ear cress).